A 1040-amino-acid polypeptide reads, in one-letter code: Multidrug resistance protein MdtB (1040 aa).

The next 12 membrane-spanning stretches (helical) occupy residues 16-36 (FIMRPVATTLLMVAILLAGII), 347-367 (LMMAIALVVMIIYLFLRNIPA), 369-389 (IIPGVAVPLSLIGTFAVMVFL), 396-416 (LTLMALTIATGFVVDDAIVVI), 440-460 (IGFTIISLTFSLIAVLIPLLF), 472-492 (FAITLAVAILISAVVSLTLTP), 537-557 (WLTLSVALSTLLLSVLLWVFI), 863-883 (LGSTVWLIVAAVVAMYIVLGI), 888-908 (FIHPITILSTLPTAGVGALLA), 911-931 (IAGSELDVIAIIGIILLIGIV), 968-988 (ILMTTLAALLGALPLMLSTGV), and 998-1018 (IGMVGGLIVSQVLTLFTTPVI).

The protein belongs to the resistance-nodulation-cell division (RND) (TC 2.A.6) family. MdtB subfamily. Part of a tripartite efflux system composed of MdtA, MdtB and MdtC. MdtB forms a heteromultimer with MdtC.

It localises to the cell inner membrane. The MdtABC tripartite complex confers resistance against novobiocin and deoxycholate. This chain is Multidrug resistance protein MdtB, found in Escherichia coli (strain K12 / MC4100 / BW2952).